Reading from the N-terminus, the 91-residue chain is LYR motif-containing protein 4 (91 aa).

2 residues coordinate pantetheine 4'-phosphate: arginine 6 and lysine 44. At lysine 47 the chain carries N6-succinyllysine.

This sequence belongs to the complex I LYR family. In terms of assembly, homodimer. Component of the mitochondrial core iron-sulfur cluster (ISC) complex composed of NFS1, LYRM4, NDUFAB1, ISCU, FXN, and FDX2; this complex is a heterohexamer containing two copies of each monomer. Component of the cyteine desulfurase complex composed of NFS1, LYRM4 and NDUFAB1; this complex contributes to the stability and cysteine desulfurase activity of NFS1. Interacts with FXN; this interaction is nickel-dependent. Interacts with the cytoplasmic form of NFS1; the complex increases the stability of NFS1. Forms a complex with the cytoplasmic form of NFS1; this complex increases the stability and cysteine desulfurase activity of NFS1. Interacts with NFS1.

Its subcellular location is the mitochondrion. It is found in the nucleus. It functions in the pathway cofactor biosynthesis; iron-sulfur cluster biosynthesis. In terms of biological role, stabilizing factor, of the core iron-sulfur cluster (ISC) assembly complex, that regulates, in association with NDUFAB1, the stability and the cysteine desulfurase activity of NFS1 and participates in the [2Fe-2S] clusters assembly on the scaffolding protein ISCU. The core iron-sulfur cluster (ISC) assembly complex is involved in the de novo synthesis of a [2Fe-2S] cluster, the first step of the mitochondrial iron-sulfur protein biogenesis. This process is initiated by the cysteine desulfurase complex (NFS1:LYRM4:NDUFAB1) that produces persulfide which is delivered on the scaffold protein ISCU in a FXN-dependent manner. Then this complex is stabilized by FDX2 which provides reducing equivalents to accomplish the [2Fe-2S] cluster assembly. Finally, the [2Fe-2S] cluster is transferred from ISCU to chaperone proteins, including HSCB, HSPA9 and GLRX5. May also participates in the iron-sulfur protein biogenesis in the cytoplasm through its interaction with the cytoplasmic form of NFS1. In Bos taurus (Bovine), this protein is LYR motif-containing protein 4.